We begin with the raw amino-acid sequence, 115 residues long: WMMIVEQKCRVIVMLAKCFEAGKKKCQKYWPDSKEAKTFGRVKVFNAEEVKYCGFLRRRFYIDSFDEMMSVEVFQYQYINWPDHSVPNTTSNLVRMHKYVIQCLEETGSDAPMVV.

The Tyrosine-protein phosphatase domain occupies 1-115 (WMMIVEQKCR…ETGSDAPMVV (115 aa)). Substrate is bound at residue D83.

It belongs to the protein-tyrosine phosphatase family.

The catalysed reaction is O-phospho-L-tyrosyl-[protein] + H2O = L-tyrosyl-[protein] + phosphate. This is Tyrosine-protein phosphatase 24 (STY-24) from Styela plicata (Wrinkled sea squirt).